The sequence spans 358 residues: Alanine racemase (358 aa).

The Proton acceptor; specific for D-alanine role is filled by Lys-34. Lys-34 bears the N6-(pyridoxal phosphate)lysine mark. Arg-129 provides a ligand contact to substrate. The Proton acceptor; specific for L-alanine role is filled by Tyr-254. Met-302 serves as a coordination point for substrate.

Belongs to the alanine racemase family. Requires pyridoxal 5'-phosphate as cofactor.

The enzyme catalyses L-alanine = D-alanine. Its pathway is amino-acid biosynthesis; D-alanine biosynthesis; D-alanine from L-alanine: step 1/1. Functionally, catalyzes the interconversion of L-alanine and D-alanine. May also act on other amino acids. The chain is Alanine racemase (alr) from Hamiltonella defensa subsp. Acyrthosiphon pisum (strain 5AT).